The sequence spans 458 residues: Argininosuccinate lyase (458 aa).

The protein belongs to the lyase 1 family. Argininosuccinate lyase subfamily.

It localises to the cytoplasm. It carries out the reaction 2-(N(omega)-L-arginino)succinate = fumarate + L-arginine. It participates in amino-acid biosynthesis; L-arginine biosynthesis; L-arginine from L-ornithine and carbamoyl phosphate: step 3/3. This Pelobacter propionicus (strain DSM 2379 / NBRC 103807 / OttBd1) protein is Argininosuccinate lyase.